Here is a 145-residue protein sequence, read N- to C-terminus: Hemoglobin subunit beta (145 aa).

The Globin domain occupies 1–145; it reads MLTAEEKAAV…VANALAHRYH (145 aa). T11 carries the phosphothreonine modification. Position 43 is a phosphoserine (S43). K58 carries the post-translational modification N6-acetyllysine. H62 provides a ligand contact to heme b. K81 carries the post-translational modification N6-acetyllysine. H91 serves as a coordination point for heme b. C92 is modified (S-nitrosocysteine).

It belongs to the globin family. As to quaternary structure, heterotetramer of two alpha chains and two beta chains. As to expression, red blood cells.

Involved in oxygen transport from the lung to the various peripheral tissues. This is Hemoglobin subunit beta (HBB) from Bos gaurus frontalis (Domestic gayal).